A 193-amino-acid polypeptide reads, in one-letter code: Copper-binding lipoprotein NosL (193 aa).

The first 19 residues, 1-19 (MRTRLRFVLVAAALALLSA), serve as a signal peptide directing secretion. Cys20 carries N-palmitoyl cysteine lipidation. Cys20 carries S-diacylglycerol cysteine lipidation.

It belongs to the NosL family. Monomer. Apo-NosL can form homodimers.

Its subcellular location is the cell membrane. In terms of biological role, may act as a metallochaperone involved in nitrous oxide reductase assembly. Specifically binds Cu(+). This is Copper-binding lipoprotein NosL from Achromobacter cycloclastes.